Here is a 702-residue protein sequence, read N- to C-terminus: MADS-box MEF2 type transcription factor MIG1 (702 aa).

The MADS-box domain maps to 1-61; that stretch reads MGRRKIEIKA…KKLYEYSSGD (61 aa). 2 disordered regions span residues 73–608 and 658–702; these read GGAT…NIDT and PSFL…KVDS. Acidic residues predominate over residues 86-96; sequence GGDDDDEEEGD. Residues 132-144 show a composition bias toward pro residues; that stretch reads ASPPIPNGVPFPP. Over residues 145–155 the composition is skewed to low complexity; that stretch reads HGHGVPRGHTP. Over residues 180 to 195 the composition is skewed to polar residues; the sequence is GSPQVNGFGFGQQQSM. Positions 201-241 are enriched in pro residues; it reads TTMPPHMPPQMAPGPPFPYPQHPQHPPHPPHPPHPPHPQQP. Composition is skewed to low complexity over residues 273-284, 326-343, and 350-371; these read PMGMQRHSVSPP, ESPQQIEPPQHQHQQQPE, and EQQQQQQQSQQSQQPQEPQSEP. Polar residues predominate over residues 456–465; sequence VDESTSNASE. Low complexity-rich tracts occupy residues 487 to 512 and 530 to 553; these read RASISSVSSAPESAPAPPSRSNSLRA and DGSGSATAESASSAQGGASTDATS. Residues 554-567 show a composition bias toward polar residues; the sequence is QSTRQNDSHSSTNM. Pro residues predominate over residues 587-600; the sequence is PPNPFAPKRPPQHP. Positions 693–702 are enriched in basic and acidic residues; that stretch reads NEPKRVKVDS.

Belongs to the MEF2 family. As to quaternary structure, interacts with MAPK MPS1.

The protein localises to the nucleus. Its function is as follows. Transcription factor acting downstream of the MPS1 MAP kinase (MAPK) cascade during conidiation and plant infection. Required for overcoming plant defense responses and the differentiation of secondary infectious hyphae in live plant cells. In Pyricularia oryzae (Rice blast fungus), this protein is MADS-box MEF2 type transcription factor MIG1.